Here is a 191-residue protein sequence, read N- to C-terminus: UPF0312 protein Shewmr7_1249 (191 aa).

Residues 1-22 (MKKQLLAALIGGFLLAPMAASA) form the signal peptide.

It belongs to the UPF0312 family. Type 1 subfamily.

It localises to the periplasm. In Shewanella sp. (strain MR-7), this protein is UPF0312 protein Shewmr7_1249.